Here is a 162-residue protein sequence, read N- to C-terminus: Interleukin-15 (162 aa).

A signal peptide spans 1–29 (MRILKPHLRSTSIQCYLCLLLNSHFLTEA). Positions 30–48 (GIHVFILGCISAGLPKTEA) are excised as a propeptide. 2 disulfides stabilise this stretch: Cys83–Cys133 and Cys90–Cys136. N-linked (GlcNAc...) asparagine glycosylation is present at Asn108.

The protein belongs to the IL-15/IL-21 family.

Its subcellular location is the secreted. Cytokine that plays a major role in the development of inflammatory and protective immune responses to microbial invaders and parasites by modulating immune cells of both the innate and adaptive immune systems. Stimulates the proliferation of natural killer cells, T-cells and B-cells and promotes the secretion of several cytokines. In monocytes, induces the production of IL8 and monocyte chemotactic protein 1/CCL2, two chemokines that attract neutrophils and monocytes respectively to sites of infection. Unlike most cytokines, which are secreted in soluble form, IL15 is expressed in association with its high affinity IL15RA on the surface of IL15-producing cells and delivers signals to target cells that express IL2RB and IL2RG receptor subunits. Binding to its receptor triggers the phosphorylation of JAK1 and JAK3 and the recruitment and subsequent phosphorylation of signal transducer and activator of transcription-3/STAT3 and STAT5. In mast cells, induces the rapid tyrosine phosphorylation of STAT6 and thereby controls mast cell survival and release of cytokines such as IL4. This chain is Interleukin-15 (IL15), found in Ailuropoda melanoleuca (Giant panda).